A 257-amino-acid polypeptide reads, in one-letter code: Imidazole glycerol phosphate synthase subunit HisF (257 aa).

Residues D11 and D130 contribute to the active site.

Belongs to the HisA/HisF family. In terms of assembly, heterodimer of HisH and HisF.

The protein resides in the cytoplasm. It catalyses the reaction 5-[(5-phospho-1-deoxy-D-ribulos-1-ylimino)methylamino]-1-(5-phospho-beta-D-ribosyl)imidazole-4-carboxamide + L-glutamine = D-erythro-1-(imidazol-4-yl)glycerol 3-phosphate + 5-amino-1-(5-phospho-beta-D-ribosyl)imidazole-4-carboxamide + L-glutamate + H(+). Its pathway is amino-acid biosynthesis; L-histidine biosynthesis; L-histidine from 5-phospho-alpha-D-ribose 1-diphosphate: step 5/9. In terms of biological role, IGPS catalyzes the conversion of PRFAR and glutamine to IGP, AICAR and glutamate. The HisF subunit catalyzes the cyclization activity that produces IGP and AICAR from PRFAR using the ammonia provided by the HisH subunit. The chain is Imidazole glycerol phosphate synthase subunit HisF from Aliivibrio fischeri (strain ATCC 700601 / ES114) (Vibrio fischeri).